A 317-amino-acid polypeptide reads, in one-letter code: Acetyl-coenzyme A carboxylase carboxyl transferase subunit alpha (317 aa).

Residues K39–S293 form the CoA carboxyltransferase C-terminal domain.

This sequence belongs to the AccA family. Acetyl-CoA carboxylase is a heterohexamer composed of biotin carboxyl carrier protein (AccB), biotin carboxylase (AccC) and two subunits each of ACCase subunit alpha (AccA) and ACCase subunit beta (AccD).

The protein localises to the cytoplasm. It carries out the reaction N(6)-carboxybiotinyl-L-lysyl-[protein] + acetyl-CoA = N(6)-biotinyl-L-lysyl-[protein] + malonyl-CoA. It participates in lipid metabolism; malonyl-CoA biosynthesis; malonyl-CoA from acetyl-CoA: step 1/1. Component of the acetyl coenzyme A carboxylase (ACC) complex. First, biotin carboxylase catalyzes the carboxylation of biotin on its carrier protein (BCCP) and then the CO(2) group is transferred by the carboxyltransferase to acetyl-CoA to form malonyl-CoA. The chain is Acetyl-coenzyme A carboxylase carboxyl transferase subunit alpha from Azorhizobium caulinodans (strain ATCC 43989 / DSM 5975 / JCM 20966 / LMG 6465 / NBRC 14845 / NCIMB 13405 / ORS 571).